A 435-amino-acid polypeptide reads, in one-letter code: Membrane-bound ghrelin O-acyltransferase MBOAT4 (435 aa).

Topologically, residues 1–5 are lumenal; that stretch reads MDWLQ. The helical transmembrane segment at 6–26 threads the bilayer; sequence LFFLHPLSFYQGAAFPFALLF. Topologically, residues 27–40 are cytoplasmic; the sequence is NYLCILDTFSTRAR. A helical transmembrane segment spans residues 41 to 56; sequence YLFLLAGGGVLAFAAM. Topologically, residues 57-59 are lumenal; the sequence is GPY. Residues 60-76 traverse the membrane as a helical segment; sequence SLLIFIPALCAVALVSF. Residues 77–82 lie on the Cytoplasmic side of the membrane; sequence LSPQEV. A helical transmembrane segment spans residues 83 to 101; it reads HRLTFFFQMGWQTLCHLGL. Topologically, residues 102 to 120 are lumenal; the sequence is HYTEYYLGEPPPVRFYITL. The chain crosses the membrane as a helical span at residues 121–136; sequence SSLMLLTQRVTSLSLD. Over 137–206 the chain is Cytoplasmic; the sequence is ICEGKVEAPR…YPSISFRALT (70 aa). The chain crosses the membrane as a helical span at residues 207 to 227; sequence WRGLQILGLECLKVALRSAVS. Residues 228-240 lie on the Lumenal side of the membrane; that stretch reads AGAGLDDCQRLEC. A helical transmembrane segment spans residues 241–261; that stretch reads IYLMWSTAWLFKLTYYSHWIL. Residues 262–324 lie on the Cytoplasmic side of the membrane; that stretch reads DDSLLHAAGF…RRLVFRKSRR (63 aa). Active-site residues include Asn-307 and His-338. A helical membrane pass occupies residues 325–338; it reads WPLLQTFAFSAWWH. Residues 339-340 are Lumenal-facing; the sequence is GL. Residues 341 to 357 traverse the membrane as a helical segment; sequence HPGQVFGFLCWSVMVKA. Residues 358–376 lie on the Cytoplasmic side of the membrane; that stretch reads DYLIHTFANVCIRSWPLRL. Residues 377 to 397 traverse the membrane as a helical segment; the sequence is LYRALTWAHTQLIIAYIMLAV. The Lumenal segment spans residues 398-407; the sequence is EGRSLSSLCQ. Residues 408-428 form a helical membrane-spanning segment; sequence LCCSYNSLFPVMYGLLLFLLA. The Cytoplasmic segment spans residues 429 to 435; it reads ERKDKRN.

The protein belongs to the membrane-bound acyltransferase family. In terms of assembly, monomer. Not glycosylated. In terms of tissue distribution, highly expressed in stomach and pancreas. Lower expression in small intestine and colon. Very low expression in testis.

It localises to the endoplasmic reticulum membrane. It carries out the reaction octanoyl-CoA + L-seryl-[protein] = O-octanoyl-L-seryl-[protein] + CoA. The enzyme catalyses hexanoyl-CoA + L-seryl-[protein] = O-hexanoyl-L-seryl-[protein] + CoA. The catalysed reaction is decanoyl-CoA + L-seryl-[protein] = O-decanoyl-L-seryl-[protein] + CoA. It catalyses the reaction L-seryl-[protein] + acetyl-CoA = O-acetyl-L-seryl-[protein] + CoA. It carries out the reaction L-seryl-[protein] + butanoyl-CoA = O-butanoyl-L-seryl-[protein] + CoA. The enzyme catalyses pentanoyl-CoA + L-seryl-[protein] = O-pentanoyl-L-seryl-[protein] + CoA. The catalysed reaction is heptanoyl-CoA + L-seryl-[protein] = O-heptanoyl-L-seryl-[protein] + CoA. It catalyses the reaction nonanoyl-CoA + L-seryl-[protein] = O-nonanoyl-L-seryl-[protein] + CoA. It carries out the reaction L-seryl-[protein] + dodecanoyl-CoA = O-dodecanoyl-L-seryl-[protein] + CoA. The enzyme catalyses L-seryl-[protein] + tetradecanoyl-CoA = O-tetradecanoyl-L-seryl-[protein] + CoA. The catalysed reaction is a fatty acyl-CoA + L-seryl-[protein] = O-fatty acyl-L-seryl-[protein] + CoA. With respect to regulation, inhibited by 1-[2-cyano-3,12-dioxooleana-1,9(11)- dien-28-oyl]ethylamide (CDDO-EA) with an IC(50) of 60 uM. Inhibited by Fe3+ and Cu2+ and the O-acyltransferase activity is completely blocked over 5 mM Fe3+ and 0.5 mM Cu2+. In terms of biological role, catalyzes ghrelin acylation at 'Ser-3' using preferentially octanoyl-CoA, hexanoyl-CoA and decanoyl-CoA as acyl-CoA donors leading to ghrelin activity. In vitro also uses acyl-CoA donors of different lengths from short-chain (C2) to long-chain fatty acids (C16) knowing that acyl-CoA donors from butanoyl-CoA (C4) to dodecanoyl-CoA (C12) are more efficient compared to longer acyl-CoA donors, such as myristoyl-CoA (C14) and palmitoyl-CoA (C16) that are not efficient. Its function is as follows. Inactive octanoyltransferase activity. This is Membrane-bound ghrelin O-acyltransferase MBOAT4 from Mus musculus (Mouse).